Reading from the N-terminus, the 354-residue chain is Ornithine transcarbamylase, mitochondrial (354 aa).

The transit peptide at 1-32 directs the protein to the mitochondrion; that stretch reads MLFHLRTLLNNAALRNGHNFVVRNFRCGQPLQ. N6-acetyllysine; alternate is present on lysine 70. N6-succinyllysine; alternate is present on lysine 70. Lysine 80 is modified (N6-succinyllysine). Residue lysine 88 is modified to N6-acetyllysine; alternate. Lysine 88 carries the N6-succinyllysine; alternate modification. Phosphoserine is present on serine 133. N6-acetyllysine; alternate occurs at positions 144, 221, 231, and 238. An N6-succinyllysine; alternate mark is found at lysine 144, lysine 221, lysine 231, and lysine 238. Lysine 243 is subject to N6-acetyllysine. The active site involves aspartate 263. N6-succinyllysine is present on residues lysine 274 and lysine 289. N6-acetyllysine; alternate is present on lysine 292. Lysine 292 carries the post-translational modification N6-succinyllysine; alternate. Residue cysteine 303 is part of the active site. N6-acetyllysine; alternate is present on lysine 307. An N6-succinyllysine; alternate modification is found at lysine 307.

The protein belongs to the aspartate/ornithine carbamoyltransferase superfamily. OTCase family. As to quaternary structure, homotrimer. In terms of processing, acetylation at Lys-88 negatively regulates ornithine carbamoyltransferase activity in response to nutrient signals.

The protein localises to the mitochondrion matrix. It carries out the reaction carbamoyl phosphate + L-ornithine = L-citrulline + phosphate + H(+). The protein operates within nitrogen metabolism; urea cycle; L-citrulline from L-ornithine and carbamoyl phosphate: step 1/1. Negatively regulated by lysine acetylation. Functionally, catalyzes the second step of the urea cycle, the condensation of carbamoyl phosphate with L-ornithine to form L-citrulline. The urea cycle ensures the detoxification of ammonia by converting it to urea for excretion. This chain is Ornithine transcarbamylase, mitochondrial, found in Bos taurus (Bovine).